The sequence spans 215 residues: Formate dehydrogenase subunit beta (215 aa).

One can recognise a 4Fe-4S ferredoxin-type 1 domain in the interval K3 to P32. Positions 12, 15, 18, 22, 73, 76, 81, 121, 138, 141, 153, and 157 each coordinate [4Fe-4S] cluster. Positions V129–S168 constitute a 4Fe-4S ferredoxin-type 2 domain.

Heterodimer of alpha (FdhA) and beta (FdhB) subunits. The cofactor is [4Fe-4S] cluster.

It is found in the periplasm. Functionally, beta chain of the formate dehydrogenase (FDH) catalyzes the reversible two-electron oxidation of formate to carbon dioxide. FDH loses activity in the presence of air, but this activity can be restored. This chain is an electron transfer unit. This is Formate dehydrogenase subunit beta from Megalodesulfovibrio gigas (strain ATCC 19364 / DSM 1382 / NCIMB 9332 / VKM B-1759) (Desulfovibrio gigas).